The primary structure comprises 155 residues: MFYYIIAFVMICLDQLTKWLIVKNMMLGDSYPVIDGFFYITSHRNSGAAWGILQGQMWFFYVITLVVIAGIVYYLQKHGQKDKLLGVALALMLGGAIGNFIDRVFRQEVVDFAHFVFGNYHYPIFNIADSSLCVGVILLFIQMLLDGKKTKESTT.

The next 2 membrane-spanning stretches (helical) occupy residues 52–72 (ILQGQMWFFYVITLVVIAGIV) and 85–105 (LGVALALMLGGAIGNFIDRVF). Catalysis depends on residues D111 and D129. The chain crosses the membrane as a helical span at residues 124–144 (IFNIADSSLCVGVILLFIQML).

The protein belongs to the peptidase A8 family.

It localises to the cell membrane. The catalysed reaction is Release of signal peptides from bacterial membrane prolipoproteins. Hydrolyzes -Xaa-Yaa-Zaa-|-(S,diacylglyceryl)Cys-, in which Xaa is hydrophobic (preferably Leu), and Yaa (Ala or Ser) and Zaa (Gly or Ala) have small, neutral side chains.. Its pathway is protein modification; lipoprotein biosynthesis (signal peptide cleavage). This protein specifically catalyzes the removal of signal peptides from prolipoproteins. The polypeptide is Lipoprotein signal peptidase (Bacillus pumilus (strain SAFR-032)).